A 302-amino-acid chain; its full sequence is tRNA dimethylallyltransferase (302 aa).

12–19 lines the ATP pocket; that stretch reads GPTASGKS. Residue 14-19 participates in substrate binding; the sequence is TASGKS. An interaction with substrate tRNA region spans residues 37–40; the sequence is DSMQ.

This sequence belongs to the IPP transferase family. In terms of assembly, monomer. Mg(2+) is required as a cofactor.

The enzyme catalyses adenosine(37) in tRNA + dimethylallyl diphosphate = N(6)-dimethylallyladenosine(37) in tRNA + diphosphate. Functionally, catalyzes the transfer of a dimethylallyl group onto the adenine at position 37 in tRNAs that read codons beginning with uridine, leading to the formation of N6-(dimethylallyl)adenosine (i(6)A). The protein is tRNA dimethylallyltransferase of Corynebacterium diphtheriae (strain ATCC 700971 / NCTC 13129 / Biotype gravis).